We begin with the raw amino-acid sequence, 365 residues long: Probable L-tyrosine/L-aspartate decarboxylase (365 aa).

K224 is subject to N6-(pyridoxal phosphate)lysine.

The protein belongs to the group II decarboxylase family. MfnA subfamily. Pyridoxal 5'-phosphate serves as cofactor.

It carries out the reaction L-tyrosine + H(+) = tyramine + CO2. The catalysed reaction is L-aspartate + H(+) = beta-alanine + CO2. It participates in cofactor biosynthesis; methanofuran biosynthesis. Its pathway is cofactor biosynthesis; coenzyme A biosynthesis. Functionally, catalyzes the decarboxylation of L-tyrosine to produce tyramine for methanofuran biosynthesis. Can also catalyze the decarboxylation of L-aspartate to produce beta-alanine for coenzyme A (CoA) biosynthesis. This is Probable L-tyrosine/L-aspartate decarboxylase from Methanoculleus marisnigri (strain ATCC 35101 / DSM 1498 / JR1).